A 107-amino-acid chain; its full sequence is Putative septation protein SpoVG (107 aa).

Positions 82-107 (ETDEVIPDKNAQPSSDSEDNGSEEEA) are disordered. Residues 97 to 107 (DSEDNGSEEEA) are compositionally biased toward acidic residues.

This sequence belongs to the SpoVG family.

Functionally, could be involved in septation. The protein is Putative septation protein SpoVG of Staphylococcus carnosus (strain TM300).